We begin with the raw amino-acid sequence, 239 residues long: Lactate utilization protein A (239 aa).

Belongs to the LutA/YkgE family.

Is involved in L-lactate degradation and allows cells to grow with lactate as the sole carbon source. The protein is Lactate utilization protein A of Bacillus cytotoxicus (strain DSM 22905 / CIP 110041 / 391-98 / NVH 391-98).